The primary structure comprises 283 residues: Pyridoxal kinase PdxY (283 aa).

Residue Ser8 coordinates substrate. 2 residues coordinate ATP: Asp110 and Glu147. Asp219 lines the substrate pocket.

This sequence belongs to the pyridoxine kinase family. PdxY subfamily. As to quaternary structure, homodimer. Mg(2+) serves as cofactor.

It carries out the reaction pyridoxal + ATP = pyridoxal 5'-phosphate + ADP + H(+). Its pathway is cofactor metabolism; pyridoxal 5'-phosphate salvage; pyridoxal 5'-phosphate from pyridoxal: step 1/1. Its function is as follows. Pyridoxal kinase involved in the salvage pathway of pyridoxal 5'-phosphate (PLP). Catalyzes the phosphorylation of pyridoxal to PLP. This chain is Pyridoxal kinase PdxY, found in Corynebacterium diphtheriae (strain ATCC 700971 / NCTC 13129 / Biotype gravis).